The following is a 246-amino-acid chain: Sensory transduction protein LytT (246 aa).

The Response regulatory domain occupies 3–117 (KVLVVDDEML…RIVQTLKKYK (115 aa)). Residues 142–246 (LALPIEESIV…AKELKKLLRI (105 aa)) enclose the HTH LytTR-type domain.

In terms of processing, phosphorylated by LytS.

The protein localises to the cytoplasm. In terms of biological role, member of the two-component regulatory system LytS/LytT that probably regulates genes involved in cell wall metabolism. This Bacillus cereus (strain ATCC 14579 / DSM 31 / CCUG 7414 / JCM 2152 / NBRC 15305 / NCIMB 9373 / NCTC 2599 / NRRL B-3711) protein is Sensory transduction protein LytT (lytT).